A 277-amino-acid chain; its full sequence is Bis(5'-nucleosyl)-tetraphosphatase, symmetrical (277 aa).

The protein belongs to the Ap4A hydrolase family.

The catalysed reaction is P(1),P(4)-bis(5'-adenosyl) tetraphosphate + H2O = 2 ADP + 2 H(+). Hydrolyzes diadenosine 5',5'''-P1,P4-tetraphosphate to yield ADP. The polypeptide is Bis(5'-nucleosyl)-tetraphosphatase, symmetrical (Bordetella bronchiseptica (strain ATCC BAA-588 / NCTC 13252 / RB50) (Alcaligenes bronchisepticus)).